Reading from the N-terminus, the 178-residue chain is Large ribosomal subunit protein uL6 (178 aa).

It belongs to the universal ribosomal protein uL6 family. Part of the 50S ribosomal subunit.

In terms of biological role, this protein binds to the 23S rRNA, and is important in its secondary structure. It is located near the subunit interface in the base of the L7/L12 stalk, and near the tRNA binding site of the peptidyltransferase center. In Campylobacter jejuni subsp. doylei (strain ATCC BAA-1458 / RM4099 / 269.97), this protein is Large ribosomal subunit protein uL6.